Consider the following 144-residue polypeptide: Large ribosomal subunit protein uL11 (144 aa).

It belongs to the universal ribosomal protein uL11 family. In terms of assembly, part of the ribosomal stalk of the 50S ribosomal subunit. Interacts with L10 and the large rRNA to form the base of the stalk. L10 forms an elongated spine to which L12 dimers bind in a sequential fashion forming a multimeric L10(L12)X complex. One or more lysine residues are methylated.

In terms of biological role, forms part of the ribosomal stalk which helps the ribosome interact with GTP-bound translation factors. This is Large ribosomal subunit protein uL11 from Polaromonas naphthalenivorans (strain CJ2).